Consider the following 492-residue polypeptide: N-succinylglutamate 5-semialdehyde dehydrogenase (492 aa).

Residue 225–230 participates in NAD(+) binding; the sequence is GSSNTG. Catalysis depends on residues Glu-248 and Cys-282.

Belongs to the aldehyde dehydrogenase family. AstD subfamily.

It carries out the reaction N-succinyl-L-glutamate 5-semialdehyde + NAD(+) + H2O = N-succinyl-L-glutamate + NADH + 2 H(+). It functions in the pathway amino-acid degradation; L-arginine degradation via AST pathway; L-glutamate and succinate from L-arginine: step 4/5. Its function is as follows. Catalyzes the NAD-dependent reduction of succinylglutamate semialdehyde into succinylglutamate. This Colwellia psychrerythraea (strain 34H / ATCC BAA-681) (Vibrio psychroerythus) protein is N-succinylglutamate 5-semialdehyde dehydrogenase.